Consider the following 619-residue polypeptide: Nucleolar GTP-binding protein 2 (619 aa).

A compositionally biased stretch (basic and acidic residues) spans 1–10 (MGTGKKEKSR). Residues 1–24 (MGTGKKEKSRIQRQGKVTGDPKVK) are disordered. Positions 222 to 383 (WNELYKVIDS…LIDCPGIVPP (162 aa)) constitute a CP-type G domain. GTP-binding positions include 332–339 (GYPNVGKS) and 376–380 (DCPGI). A disordered region spans residues 473–619 (PWFTPAPEKE…PPKKQRRSRK (147 aa)). Residues 489–500 (MEGREGRYGEMS) show a composition bias toward basic and acidic residues. Acidic residues predominate over residues 536–546 (SDSDSEVEEAA). A compositionally biased stretch (basic and acidic residues) spans 547 to 556 (EEKGEEKSTA). Residues 565 to 603 (SSDEEEDGEEEGSDVEDDEEGSDLDIEGASELEESESEA) show a composition bias toward acidic residues.

This sequence belongs to the TRAFAC class YlqF/YawG GTPase family. NOG2 subfamily.

The protein localises to the nucleus. It localises to the nucleolus. Its function is as follows. GTPase that associates with pre-60S ribosomal subunits in the nucleolus and is required for their nuclear export and maturation. This Neurospora crassa (strain ATCC 24698 / 74-OR23-1A / CBS 708.71 / DSM 1257 / FGSC 987) protein is Nucleolar GTP-binding protein 2 (nog-2).